The primary structure comprises 1738 residues: Sodium leak channel NALCN (1738 aa).

At 1 to 36 (MLKRKQSSRVEAQPVTDFGPDESLSDNADILWINKP) the chain is on the cytoplasmic side. A helical membrane pass occupies residues 37-57 (WVHSLLRICAIISVISVCMNT). The Extracellular portion of the chain corresponds to 58–65 (PMTFEHYP). The chain crosses the membrane as a helical span at residues 66 to 90 (PLQYVTFTLDTLLMFLYTAEMIAKM). The Cytoplasmic segment spans residues 91–106 (HIRGIVKGDSSYVKDR). A helical transmembrane segment spans residues 107 to 129 (WCVFDGFMVFCLWVSLVLQVFEI). Residues 130-137 (ADIVDQMS) are Extracellular-facing. The chain crosses the membrane as a helical; Voltage-sensor span at residues 138–158 (PWGMLRIPRPLIMIRAFRIYF). Topologically, residues 159–173 (RFELPRTRITNILKR) are cytoplasmic. A helical membrane pass occupies residues 174–199 (SGEQIWSVSIFLLFFLLLYGILGVQM). Topologically, residues 200 to 269 (FGTFTYHCVV…YSGFNEIGTS (70 aa)) are extracellular. Cystine bridges form between Cys-207–Cys-239 and Cys-229–Cys-245. Residues Asn-210 and Asn-216 are each glycosylated (N-linked (GlcNAc...) asparagine). The pore-forming intramembrane region spans 270-289 (IFTVYEAASQEGWVFLMYRA). The Extracellular segment spans residues 290-294 (IDSFP). The chain crosses the membrane as a helical span at residues 295–322 (RWRSYFYFITLIFFLAWLVKNVFIAVII). At 323–382 (ETFAEIRVQFQQMWGSRSSTTSTATTQMFHEDAAGGWQLVAVDVNKPQGRAPACLQKMMR) the chain is on the cytoplasmic side. Residues 383 to 403 (SSVFHMFILSMVTVDVIVAAS) form a helical membrane-spanning segment. The Extracellular segment spans residues 404 to 416 (NYYKGENFRRQYD). Residues 417–439 (EFYLAEVAFTVLFDLEALLKIWC) form a helical membrane-spanning segment. Residues 440 to 447 (LGFTGYIS) are Cytoplasmic-facing. The chain crosses the membrane as a helical span at residues 448-468 (SSLHKFELLLVIGTTLHVYPD). At 469-472 (LYHS) the chain is on the extracellular side. The chain crosses the membrane as a helical; Voltage-sensor span at residues 473–492 (QFTYFQVLRVVRLIKISPAL). Over 493–502 (EDFVYKIFGP) the chain is Cytoplasmic. Residues 503 to 530 (GKKLGSLVVFTASLLIVMSAISLQMFCF) form a helical membrane-spanning segment. Residues 531-543 (VEELDRFTTFPRA) are Extracellular-facing. The pore-forming intramembrane region spans 544–563 (FMSMFQILTQEGWVDVMDQT). Topologically, residues 564–569 (LNAVGH) are extracellular. The helical transmembrane segment at 570–599 (MWAPVVAIYFILYHLFATLILLSLFVAVIL) threads the bilayer. Over 600 to 886 (DNLELDEDLK…QLYDLLGLVT (287 aa)) the chain is Cytoplasmic. Residues 762–785 (QERRSLRHGSNSQRISRGKSLETL) form a disordered region. Positions 795–830 (YRNAQREDSEIKMIQEKKEQAEMKRKVQEEELRENH) form a coiled coil. The helical transmembrane segment at 887–906 (YLDWVMIIVTICSCISMMFE) threads the bilayer. Residues 907–915 (SPFRRVMHA) lie on the Extracellular side of the membrane. A helical transmembrane segment spans residues 916 to 939 (PTLQIAEYVFVIFMSIELNLKIMA). Topologically, residues 940-947 (DGLFFTPT) are cytoplasmic. A helical transmembrane segment spans residues 948–972 (AVIRDFGGVMDIFIYLVSLIFLCWM). The Extracellular portion of the chain corresponds to 973 to 980 (PQNVPAES). A helical; Voltage-sensor membrane pass occupies residues 981-1003 (GAQLLMVLRCLRPLRIFKLVPQM). The Cytoplasmic segment spans residues 1004 to 1015 (RKVVRELFSGFK). A helical transmembrane segment spans residues 1016–1039 (EIFLVSILLLTLMLVFASFGVQLF). Residues 1040 to 1104 (AGKLAKCNDP…NFNFDNVGNA (65 aa)) are Extracellular-facing. Cysteines 1046 and 1057 form a disulfide. N-linked (GlcNAc...) asparagine glycosylation occurs at Asn-1064. The pore-forming intramembrane region spans 1105 to 1124 (MLALFEVLSLKGWVEVRDVI). The Extracellular portion of the chain corresponds to 1125-1129 (IHRVG). A helical transmembrane segment spans residues 1130–1159 (PIHGIYIHVFVFLGCMIGLTLFVGVVIANF). Residues 1160–1210 (NENKGTALLTVDQRRWEDLKSRLKIAQPLHLPPRPDNDGFRAKMYDITQHP) are Cytoplasmic-facing. A helical transmembrane segment spans residues 1211-1227 (FFKRTIALLVLAQSVLL). The Extracellular portion of the chain corresponds to 1228–1236 (SVKWDVEDP). A helical membrane pass occupies residues 1237-1260 (VTVPLATMSVVFTFIFVLEVTMKI). Topologically, residues 1261–1271 (IAMSPAGFWQS) are cytoplasmic. Residues 1272 to 1293 (RRNRYDLLVTSLGVVWVVLHFA) form a helical membrane-spanning segment. Residues 1294–1296 (LLN) lie on the Extracellular side of the membrane. Residues 1297–1318 (AYTYMMGACVIVFRFFSICGKH) form a helical; Voltage-sensor membrane-spanning segment. The Cytoplasmic portion of the chain corresponds to 1319–1331 (VTLKMLLLTVVVS). The helical transmembrane segment at 1332–1357 (MYKSFFIIVGMFLLLLCYAFAGVVLF) threads the bilayer. Topologically, residues 1358 to 1378 (GTVKYGENINRHANFSSAGKA) are extracellular. Residues 1379-1398 (ITVLFRIVTGEDWNKIMHDC) constitute an intramembrane region (pore-forming). The Extracellular segment spans residues 1399–1420 (MVQPPFCTPDEFTYWATDCGNY). Cys-1405 and Cys-1417 are oxidised to a cystine. The chain crosses the membrane as a helical span at residues 1421–1447 (AGALMYFCSFYVIIAYIMLNLLVAIIV). Over 1448–1738 (ENFSLFYSTE…DESGDDLLDI (291 aa)) the chain is Cytoplasmic. Residues 1611 to 1678 (PPSIETTQPS…QWRLPSAPKP (68 aa)) form a disordered region. Over residues 1613-1632 (SIETTQPSEDTNANSQDNSM) the composition is skewed to polar residues. Residues 1633-1648 (QPETSSQQQLLSPTLS) show a composition bias toward low complexity.

The protein belongs to the NALCN family. Found in a complex with NALCN, UNC79, UNC80 and NACL1; these auxiliary subunits are indispensable for the function of NALCN channel. Interacts with UNC80; required for the NALCN activation/inhibition by GPCRs in neurons. Found in a complex with NALCN, UNC79 and UNC80; UNC80 bridges NALCN to UNC79. Interacts with CHRM3. In terms of processing, phosphorylated on tyrosine residues.

Its subcellular location is the cell membrane. It catalyses the reaction Na(+)(in) = Na(+)(out). With respect to regulation, inhibited by low micromolar concentrations of Gd(3+) and high micromolar concentrations of verapamil. Insensitive to tetrodotoxin (TTX) and potentiated by low external Ca(2+) concentration. Its function is as follows. Voltage-gated ion channel responsible for the resting Na(+) permeability that controls neuronal excitability. NALCN channel functions as a multi-protein complex, which consists at least of NALCN, NALF1, UNC79 and UNC80. NALCN is the voltage-sensing, pore-forming subunit of the NALCN channel complex. NALCN channel complex is constitutively active and conducts monovalent cations but is blocked by physiological concentrations of extracellular divalent cations. In addition to its role in regulating neuronal excitability, is required for normal respiratory rhythm, systemic osmoregulation by controlling the serum sodium concentration and in the regulation of the intestinal pace-making activity in the interstitial cells of Cajal. NALCN channel is also activated by neuropeptides such as neurotensin and substance P (SP) through a SRC family kinases-dependent pathway. In addition, NALCN activity is enhanced/modulated by several GPCRs, such as CHRM3. This is Sodium leak channel NALCN from Homo sapiens (Human).